Here is a 290-residue protein sequence, read N- to C-terminus: Oxaloacetate decarboxylase 2 (290 aa).

Position 50 (S50) interacts with substrate. D88 provides a ligand contact to Mg(2+). Substrate is bound by residues R159 and H235.

Belongs to the isocitrate lyase/PEP mutase superfamily. Oxaloacetate decarboxylase family. Homotetramer; dimer of dimers. It depends on Mg(2+) as a cofactor.

It catalyses the reaction oxaloacetate + H(+) = pyruvate + CO2. In terms of biological role, catalyzes the decarboxylation of oxaloacetate into pyruvate. Seems to play a role in maintaining cellular concentrations of bicarbonate and pyruvate. The polypeptide is Oxaloacetate decarboxylase 2 (Pseudomonas fluorescens (strain Pf0-1)).